The following is a 1995-amino-acid chain: uncharacterized protein (1995 aa).

Helical transmembrane passes span 31–51, 53–73, 106–126, 157–177, 212–232, 254–274, and 307–327; these read NYTE…EFFK, FFSF…PDIA, LVIF…ILPT, FLWL…WLSL, IFLL…PFIS, FLLI…SLLQ, and ILNF…IPYY. 2 disordered regions span residues 1418-1441 and 1848-1883; these read SLKK…HQFS and DLRW…KTNP. Composition is skewed to basic residues over residues 1422–1441 and 1853–1863; these read SQIK…HQFS and PSSRTKQKRKD.

Belongs to the ycf78 family.

It is found in the plastid. It localises to the chloroplast membrane. Its function is as follows. Essential for cell growth. May be involved in binding chloroplast DNA to either the chloroplast envelope or the thylakoid membrane. This is an uncharacterized protein from Chlamydomonas reinhardtii (Chlamydomonas smithii).